Reading from the N-terminus, the 373-residue chain is UDP-N-acetylenolpyruvoylglucosamine reductase (373 aa).

In terms of domain architecture, FAD-binding PCMH-type spans 30-203 (LACTANSVVT…SRVGFRLHTD (174 aa)). Residue Arg-180 is part of the active site. Ser-258 serves as the catalytic Proton donor. Residue Glu-356 is part of the active site.

The protein belongs to the MurB family. Requires FAD as cofactor.

The protein localises to the cytoplasm. The enzyme catalyses UDP-N-acetyl-alpha-D-muramate + NADP(+) = UDP-N-acetyl-3-O-(1-carboxyvinyl)-alpha-D-glucosamine + NADPH + H(+). It functions in the pathway cell wall biogenesis; peptidoglycan biosynthesis. In terms of biological role, cell wall formation. This is UDP-N-acetylenolpyruvoylglucosamine reductase from Psychrobacter arcticus (strain DSM 17307 / VKM B-2377 / 273-4).